A 443-amino-acid polypeptide reads, in one-letter code: COP9 signalosome complex subunit 2 (443 aa).

Residues 254 to 416 (AHTDFFEAFK…QLLELDHQKR (163 aa)) enclose the PCI domain.

This sequence belongs to the CSN2 family. In terms of assembly, component of the CSN complex, probably composed of cops1, cops2, cops3, cops4, cops5, cops6, cops7, cops8 and cops9.

It localises to the cytoplasm. The protein localises to the nucleus. In terms of biological role, essential component of the COP9 signalosome complex (CSN), a complex involved in various cellular and developmental processes. The CSN complex is an essential regulator of the ubiquitin (Ubl) conjugation pathway by mediating the deneddylation of the cullin subunits of E3 ligase complexes, leading to modify the Ubl ligase activity. The protein is COP9 signalosome complex subunit 2 (cops2) of Danio rerio (Zebrafish).